Consider the following 242-residue polypeptide: MSDTSLDSMRDLRAASCGPVGSPEVTTDLSENVILTSLDDLHNWARLSSLWPLLYGTACCFIEFAALIGSRFDFDRFGLVPRSSPRQADLLIVAGTVTMKMAPALVRLYEQMPEPKYVIAMGACTITGGMFSADSTTAVRGVDKLIPVDLYLPGCPPRPEAIFDAVIKLRKKVGDEAIAERGKLEQTHRYSTVEHRMTAVDPIVDGRYLRAETQQKALAAAEAVSPLNLAPAEQPETIPAKS.

4 residues coordinate [4Fe-4S] cluster: Cys59, Cys60, Cys124, and Cys155.

This sequence belongs to the complex I 20 kDa subunit family. NDH-1 can be composed of about 15 different subunits; different subcomplexes with different compositions have been identified which probably have different functions. Requires [4Fe-4S] cluster as cofactor.

The protein resides in the cellular thylakoid membrane. It carries out the reaction a plastoquinone + NADH + (n+1) H(+)(in) = a plastoquinol + NAD(+) + n H(+)(out). It catalyses the reaction a plastoquinone + NADPH + (n+1) H(+)(in) = a plastoquinol + NADP(+) + n H(+)(out). Functionally, NDH-1 shuttles electrons from an unknown electron donor, via FMN and iron-sulfur (Fe-S) centers, to quinones in the respiratory and/or the photosynthetic chain. The immediate electron acceptor for the enzyme in this species is believed to be plastoquinone. Couples the redox reaction to proton translocation, and thus conserves the redox energy in a proton gradient. Cyanobacterial NDH-1 also plays a role in inorganic carbon-concentration. The sequence is that of NAD(P)H-quinone oxidoreductase subunit K from Synechococcus sp. (strain RCC307).